The following is a 101-amino-acid chain: Small ribosomal subunit protein uS14 (101 aa).

Belongs to the universal ribosomal protein uS14 family. In terms of assembly, part of the 30S ribosomal subunit. Contacts proteins S3 and S10.

Binds 16S rRNA, required for the assembly of 30S particles and may also be responsible for determining the conformation of the 16S rRNA at the A site. This is Small ribosomal subunit protein uS14 from Alcanivorax borkumensis (strain ATCC 700651 / DSM 11573 / NCIMB 13689 / SK2).